The following is a 316-amino-acid chain: Probable prolyl 4-hydroxylase 7 (316 aa).

The Cytoplasmic portion of the chain corresponds to 1–4; the sequence is MDSR. Residues 5–24 traverse the membrane as a helical; Signal-anchor for type II membrane protein segment; it reads IFLAFSLCFLFTLPLISSAP. Topologically, residues 25 to 316 are lumenal; sequence NRFLTRSSNT…CRKSCKACSS (292 aa). Asparagine 96 carries an N-linked (GlcNAc...) asparagine glycan. The Fe2OG dioxygenase domain occupies 139–261; sequence NGESMQILHY…KWSATRWIHV (123 aa). Fe cation contacts are provided by histidine 157 and aspartate 159. Asparagine 233 carries N-linked (GlcNAc...) asparagine glycosylation. Histidine 242 serves as a coordination point for Fe cation. Position 252 (lysine 252) interacts with 2-oxoglutarate. A ShKT domain is found at 274 to 314; the sequence is CMDENVSCEKWAKAGECQKNPTYMVGSDKDHGYCRKSCKAC. 3 disulfides stabilise this stretch: cysteine 274-cysteine 314, cysteine 281-cysteine 307, and cysteine 290-cysteine 311. Asparagine 278 is a glycosylation site (N-linked (GlcNAc...) asparagine).

Belongs to the P4HA family. Requires Fe(2+) as cofactor. The cofactor is L-ascorbate.

The protein localises to the endoplasmic reticulum membrane. The catalysed reaction is L-prolyl-[collagen] + 2-oxoglutarate + O2 = trans-4-hydroxy-L-prolyl-[collagen] + succinate + CO2. Catalyzes the post-translational formation of 4-hydroxyproline in -Xaa-Pro-Gly- sequences in proline-rich peptide sequences of plant glycoproteins and other proteins. Hydroxyprolines are important constituent of many plant cell wall glycoproteins such as extensins, hydroxyproline-rich glycoproteins, lectins and arabinogalactan proteins. In Arabidopsis thaliana (Mouse-ear cress), this protein is Probable prolyl 4-hydroxylase 7.